A 353-amino-acid polypeptide reads, in one-letter code: Mitogen-activated protein kinase mpkB (353 aa).

The Protein kinase domain occupies 21–309 (YEIQDVIGEG…VEEALRHPYL (289 aa)). Residues 27-35 (IGEGAYGVV) and K50 each bind ATP. Catalysis depends on D145, which acts as the Proton acceptor.

This sequence belongs to the protein kinase superfamily. Ser/Thr protein kinase family. MAP kinase subfamily. Requires Mg(2+) as cofactor.

Its subcellular location is the nucleus. The enzyme catalyses L-seryl-[protein] + ATP = O-phospho-L-seryl-[protein] + ADP + H(+). The catalysed reaction is L-threonyl-[protein] + ATP = O-phospho-L-threonyl-[protein] + ADP + H(+). Its activity is regulated as follows. Activated by threonine and tyrosine phosphorylation. Functionally, mitogen-activated protein kinase (MAPK) that plays a role in conidiation and regulation of secondary metabolite biosynthesis. Acts as a repressor of dihydroxynaphthalene (DHN)-melanin production. The chain is Mitogen-activated protein kinase mpkB from Aspergillus fumigatus (strain CBS 144.89 / FGSC A1163 / CEA10) (Neosartorya fumigata).